A 1377-amino-acid chain; its full sequence is DNA-directed RNA polymerase subunit beta (1377 aa).

This sequence belongs to the RNA polymerase beta chain family. The RNAP catalytic core consists of 2 alpha, 1 beta, 1 beta' and 1 omega subunit. When a sigma factor is associated with the core the holoenzyme is formed, which can initiate transcription.

The enzyme catalyses RNA(n) + a ribonucleoside 5'-triphosphate = RNA(n+1) + diphosphate. Functionally, DNA-dependent RNA polymerase catalyzes the transcription of DNA into RNA using the four ribonucleoside triphosphates as substrates. This chain is DNA-directed RNA polymerase subunit beta, found in Brucella suis biovar 1 (strain 1330).